We begin with the raw amino-acid sequence, 288 residues long: Ankyrin repeat and SOCS box protein 8 (288 aa).

Ser17 is modified (phosphoserine). ANK repeat units lie at residues 52 to 81 (GTLK…EVNA), 85 to 113 (YNRT…NPNA), 117 to 146 (NRDT…SVNA), and 150 to 179 (NNDT…EVRV). Residues 235-288 (QLCEKLTVLCSAPGTLKTLARYTVRRSLGLQYLPDAVKGLPLPASLKEYLLLLE) enclose the SOCS box domain.

The protein belongs to the ankyrin SOCS box (ASB) family. In terms of assembly, interacts with TBK1; this interaction promotes TBK1 proteasomal degradation. Phosphorylated by TBK1.

The protein localises to the cytoplasm. Its pathway is protein modification; protein ubiquitination. In terms of biological role, may be a substrate-recognition component of a SCF-like ECS (Elongin-Cullin-SOCS-box protein) E3 ubiquitin-protein ligase complex which mediates the ubiquitination and subsequent proteasomal degradation of target proteins. Inhibits IFN-beta production through the IRF3 signaling pathway by targeting TBK1 via 'Lys-48'-linked ubiquitination, leading to its proteasomal degradation. The polypeptide is Ankyrin repeat and SOCS box protein 8 (ASB8) (Pongo abelii (Sumatran orangutan)).